Consider the following 96-residue polypeptide: MTKSELIERLCSQQTHLSAKQVEDAIKEILEHMAGTLAEGDRIEIRGFGSFSLHYRAPRVGRNPKTGDKVELDGKYVPHFKPGKELRDRVNAAIAA.

Belongs to the bacterial histone-like protein family. As to quaternary structure, heterodimer of an alpha and a beta chain.

In terms of biological role, this protein is one of the two subunits of integration host factor, a specific DNA-binding protein that functions in genetic recombination as well as in transcriptional and translational control. This Photobacterium profundum (strain SS9) protein is Integration host factor subunit beta.